Here is a 233-residue protein sequence, read N- to C-terminus: Cysteine-rich venom protein (233 aa).

The N-terminal stretch at 1–12 (PILAAVLQQSSG) is a signal peptide. The 129-residue stretch at 31–159 (VDLHNSLRRS…PYSYFFVCQY (129 aa)) folds into the SCP domain. Cystine bridges form between C68-C146, C85-C160, C141-C157, C179-C186, C182-C191, C195-C228, C204-C222, and C213-C226. Residues 195–228 (CTRENKFTNCNTMVQQSSCQDNYMKTNCPASCFC) form the ShKT domain.

Belongs to the CRISP family. As to expression, expressed by the venom gland.

The protein resides in the secreted. Functionally, blocks contraction of smooth muscle elicited by high potassium-induced depolarization, but does not block caffeine-stimulated contraction. May target voltage-gated calcium channels on smooth muscle. The chain is Cysteine-rich venom protein from Trimeresurus stejnegeri (Chinese green tree viper).